A 166-amino-acid chain; its full sequence is UPF0304 protein PBPRA2768 (166 aa).

It belongs to the UPF0304 family.

This is UPF0304 protein PBPRA2768 from Photobacterium profundum (strain SS9).